The primary structure comprises 100 residues: Large ribosomal subunit protein uL23 (100 aa).

It belongs to the universal ribosomal protein uL23 family. Part of the 50S ribosomal subunit. Contacts protein L29, and trigger factor when it is bound to the ribosome.

One of the early assembly proteins it binds 23S rRNA. One of the proteins that surrounds the polypeptide exit tunnel on the outside of the ribosome. Forms the main docking site for trigger factor binding to the ribosome. The chain is Large ribosomal subunit protein uL23 from Synechococcus sp. (strain CC9605).